Here is a 146-residue protein sequence, read N- to C-terminus: HTH-type transcriptional regulator FarR (146 aa).

The region spanning 7–139 (HASINIGLIQ…LKDLLAELAK (133 aa)) is the HTH marR-type domain. A DNA-binding region (H-T-H motif) is located at residues 53–76 (FQDLANQACILRPSLTGILTRLEK).

Repressor activity requires the presence of the Integration Host Factor (IHF), which binds to sequences located between FarR binding sites A and C. IHF binding to the promoter region stabilizes the binding of FarR to its binding sites A and C and as a consequence, enhances repression of the farAB operon. In terms of biological role, negatively controls expression of the farAB operon by binding directly to the farAB promoter region. Binds to three sites (sites A, B and C) within the DNA sequence upstream of farA. Also represses its own expression. In Neisseria gonorrhoeae, this protein is HTH-type transcriptional regulator FarR.